We begin with the raw amino-acid sequence, 330 residues long: Pseudouridine-5'-phosphate glycosidase (330 aa).

Glu50 (proton donor) is an active-site residue. Positions 112 and 132 each coordinate substrate. Asp164 serves as a coordination point for Mn(2+). Substrate is bound at residue 166–168 (SSD). The active-site Nucleophile is Lys185.

The protein belongs to the pseudouridine-5'-phosphate glycosidase family. Homotrimer. Requires Mn(2+) as cofactor.

Its subcellular location is the peroxisome. The enzyme catalyses D-ribose 5-phosphate + uracil = psi-UMP + H2O. In terms of biological role, catalyzes the reversible cleavage of pseudouridine 5'-phosphate (PsiMP) to ribose 5-phosphate and uracil. Functions biologically in the cleavage direction, as part of a pseudouridine degradation pathway. Acts together with the pseudouridine kinase PUKI in the peroxisome to prevent toxic pseudouridine monophosphate accumulation. Can catalyze the formation of pseudouridine 5'-phosphate (reverse reaction) in vitro, with a catalytic efficiency 4 times lower than the hydrolysis reaction. This chain is Pseudouridine-5'-phosphate glycosidase, found in Arabidopsis thaliana (Mouse-ear cress).